The chain runs to 66 residues: Large ribosomal subunit protein bL35 (66 aa).

Residues 1–15 (MSKMKTKSGAKKRFK) show a composition bias toward basic residues. The segment at 1 to 35 (MSKMKTKSGAKKRFKLTASGKVKAGQAGKRHGMIK) is disordered.

The protein belongs to the bacterial ribosomal protein bL35 family.

The protein is Large ribosomal subunit protein bL35 of Maricaulis maris (strain MCS10) (Caulobacter maris).